Here is a 248-residue protein sequence, read N- to C-terminus: 2,3-bisphosphoglycerate-dependent phosphoglycerate mutase (248 aa).

Substrate contacts are provided by residues 8 to 15 (RHGESTWN), 21 to 22 (TG), Arg-60, 87 to 90 (ERHY), Lys-98, and 114 to 115 (RR). Catalysis depends on His-9, which acts as the Tele-phosphohistidine intermediate. Residue Glu-87 is the Proton donor/acceptor of the active site. Residues 118-137 (DTPPPALEPTDPRASYDDPR) are disordered. The span at 127 to 137 (TDPRASYDDPR) shows a compositional bias: basic and acidic residues. A substrate-binding site is contributed by 183-184 (GN).

Belongs to the phosphoglycerate mutase family. BPG-dependent PGAM subfamily. In terms of assembly, homodimer.

It catalyses the reaction (2R)-2-phosphoglycerate = (2R)-3-phosphoglycerate. It participates in carbohydrate degradation; glycolysis; pyruvate from D-glyceraldehyde 3-phosphate: step 3/5. Its function is as follows. Catalyzes the interconversion of 2-phosphoglycerate and 3-phosphoglycerate. The sequence is that of 2,3-bisphosphoglycerate-dependent phosphoglycerate mutase from Cupriavidus necator (strain ATCC 17699 / DSM 428 / KCTC 22496 / NCIMB 10442 / H16 / Stanier 337) (Ralstonia eutropha).